A 466-amino-acid polypeptide reads, in one-letter code: Acetylcholine-gated chloride channel subunit acc-1 (466 aa).

The N-terminal stretch at 1 to 24 is a signal peptide; it reads MSHPGWIMVSFLTELLSQSSKGIA. At 25 to 242 the chain is on the extracellular side; the sequence is QSLDNCANDT…FVFERRYGWY (218 aa). N-linked (GlcNAc...) asparagine glycans are attached at residues asparagine 32, asparagine 102, and asparagine 143. A disulfide bridge connects residues cysteine 158 and cysteine 172. Asparagine 211 carries an N-linked (GlcNAc...) asparagine glycan. A helical transmembrane segment spans residues 243-263; it reads VLQGYIPTMVTIVISWISFYL. The Cytoplasmic segment spans residues 264-272; the sequence is GPRAIPART. Residues 273-290 form a helical membrane-spanning segment; it reads MLGVNSLLAMTFQFGNII. Residues 291-304 lie on the Extracellular side of the membrane; sequence RNLPRVSYVKAIDV. Residues 305–325 traverse the membrane as a helical segment; that stretch reads WMLSGMLFIFLSLLELAVVGF. The Cytoplasmic segment spans residues 326 to 427; that stretch reads MSRNEGLPPK…MRELRPETVD (102 aa). Residues 333–352 are disordered; it reads PPKVKKRKRQEDDDEGFSWK. Residues 428-448 form a helical membrane-spanning segment; sequence FYSAIFFPTAYMLFNISYWSF. At 449-466 the chain is on the extracellular side; the sequence is YLTSLSEYFDEDVNIDQP.

This sequence belongs to the ligand-gated ion channel (TC 1.A.9) family. As to quaternary structure, homopentamer (in vitro). Forms heteropentamers composed of acc-1 and acc-4 or acc-1 and acc-3. Both homopentamers and heteropentamers form functional ion channels. In terms of tissue distribution, expressed in a subset of cholinergic motor neurons including cholinergic motor neurons in the ventral cord, the retrovesicular ganglion and in head neurons such as the SMD, RMD motor neurons, the AVA and AVE command interneurons and the SAA neurons. Also expressed in a small number of glutamatergic neurons including the pharyngeal neurons MI and M3, the PLM neurons and a pair of neurons in the lateral ganglion.

It is found in the cell membrane. Functionally, acetylcholine-gated chloride channel subunit. Forms functional homopentameric (in vitro) and functional heteropentameric ion channels with acc-3 and acc-4 ion channel subunits. Currents in channels are triggered in response to acetylcholine, but not in response to GABA, glutamate, glycine, histamine or dopamine. The polypeptide is Acetylcholine-gated chloride channel subunit acc-1 (Caenorhabditis elegans).